We begin with the raw amino-acid sequence, 267 residues long: Levodione reductase (267 aa).

Residue 17–42 (LITGGGSGLGRATAVRLAAEGAKLSL) participates in NAD(+) binding. Residue S152 participates in substrate binding. Y165 (proton acceptor) is an active-site residue.

It belongs to the short-chain dehydrogenases/reductases (SDR) family.

The enzyme catalyses (4R)-hydroxy-(6R)-2,2,6-trimethylcyclohexanone + NAD(+) = (6R)-2,2,6-trimethyl-1,4-cyclohexanedione + NADH + H(+). Strongly activated by monovalent cations, such as K(+), Na(+), and NH4(+). In terms of biological role, catalyzes the regio- and stereoselective reversible NAD-dependent reduction of (6R)-2,2,6-trimethyl-1,4-cyclohexanedione (levodione) to (4R,6R)-4-hydroxy-2,2,6-trimethylcyclohexanone (actinol). This is Levodione reductase (lvr) from Leifsonia aquatica (Corynebacterium aquaticum).